The following is a 230-amino-acid chain: Urease accessory protein UreF (230 aa).

The protein belongs to the UreF family. As to quaternary structure, ureD, UreF and UreG form a complex that acts as a GTP-hydrolysis-dependent molecular chaperone, activating the urease apoprotein by helping to assemble the nickel containing metallocenter of UreC. The UreE protein probably delivers the nickel.

The protein resides in the cytoplasm. In terms of biological role, required for maturation of urease via the functional incorporation of the urease nickel metallocenter. This Chromohalobacter salexigens (strain ATCC BAA-138 / DSM 3043 / CIP 106854 / NCIMB 13768 / 1H11) protein is Urease accessory protein UreF.